A 60-amino-acid polypeptide reads, in one-letter code: Large ribosomal subunit protein uL30 (60 aa).

Belongs to the universal ribosomal protein uL30 family. Part of the 50S ribosomal subunit.

The sequence is that of Large ribosomal subunit protein uL30 from Paracidovorax citrulli (strain AAC00-1) (Acidovorax citrulli).